The sequence spans 584 residues: Mitochondrial sodium/calcium exchanger protein (584 aa).

The signal sequence occupies residues 1–26; it reads MAGRRLNLRWALSVLCVLLMAETVSG. Topologically, residues 27-95 are extracellular; the sequence is TRGSSTGAHI…GIFCHFPPSL (69 aa). Residue N60 is glycosylated (N-linked (GlcNAc...) asparagine). A helical transmembrane segment spans residues 96–116; that stretch reads LPLAVTLYVSWLLYLFLILGV. Residues 117–140 lie on the Cytoplasmic side of the membrane; sequence TAAKFFCPNLSAISTTLKLSHNVA. Residues 141–161 form a helical membrane-spanning segment; that stretch reads GVTFLAFGNGAPDIFSALVAF. The Extracellular portion of the chain corresponds to 162 to 168; sequence SDPHTAG. Residues 169-189 traverse the membrane as a helical segment; sequence LALGALFGAGVLVTTVVAGGI. At 190 to 200 the chain is on the cytoplasmic side; it reads TILHPFMAASR. Residues 201 to 221 form a helical membrane-spanning segment; the sequence is PFFRDIVFYMVAVFLTFLMLF. Residues 222–226 lie on the Extracellular side of the membrane; sequence RGRVT. Residues 227-247 traverse the membrane as a helical segment; that stretch reads LAWALGYLGLYVFYVVTVILC. Residues 248–325 lie on the Cytoplasmic side of the membrane; that stretch reads TWIYQRQRRG…KWRRKSAYWK (78 aa). S258 is subject to Phosphoserine; by PKA. The chain crosses the membrane as a helical span at residues 326–346; it reads ALKVFKLPVEFLLLLTVPVVD. The Extracellular segment spans residues 347-360; the sequence is PDKDDQNWKRPLNC. A helical membrane pass occupies residues 361–381; that stretch reads LHLVISPLVVVLTLQSGTYGV. Residues 382 to 383 lie on the Cytoplasmic side of the membrane; sequence YE. A helical membrane pass occupies residues 384-404; the sequence is IGGLVPVWVVVVIAGTALASV. The Extracellular segment spans residues 405–416; that stretch reads TFFATSDSQPPR. A helical membrane pass occupies residues 417–437; sequence LHWLFAFLGFLTSALWINAAA. At 438 to 445 the chain is on the cytoplasmic side; the sequence is TEVVNILR. Residues 446-466 traverse the membrane as a helical segment; sequence SLGVVFRLSNTVLGLTLLAWG. Residues 467 to 487 lie on the Extracellular side of the membrane; that stretch reads NSIGDAFSDFTLARQGYPRMA. The chain crosses the membrane as a helical span at residues 488 to 508; that stretch reads FSACFGGIIFNILVGVGLGCL. Residues 509–524 lie on the Cytoplasmic side of the membrane; it reads LQISRSHTEVKLEPDG. Residues 525 to 545 traverse the membrane as a helical segment; it reads LLVWVLAGALGLSLVFSLVSV. The Extracellular segment spans residues 546–558; sequence PLQCFQLSRVYGF. Residues 559–579 traverse the membrane as a helical segment; that stretch reads CLLLFYLNFLVVALLTEFGVI. At 580–584 the chain is on the cytoplasmic side; sequence HLKSM.

Belongs to the Ca(2+):cation antiporter (CaCA) (TC 2.A.19) family. SLC24A subfamily. In terms of processing, phosphorylation at Ser-258 by PKA prevents calcium overload. Present in pancreatic beta-cells (at protein level).

The protein resides in the mitochondrion inner membrane. It carries out the reaction Ca(2+)(in) + 3 Na(+)(out) = Ca(2+)(out) + 3 Na(+)(in). It catalyses the reaction 3 Li(+)(out) + Ca(2+)(in) = 3 Li(+)(in) + Ca(2+)(out). Inhibited by the sodium/calcium exchanger inhibitor CGP-37157. Strongly inhibited by zinc. Its function is as follows. Mitochondrial sodium/calcium antiporter that mediates sodium-dependent calcium efflux from mitochondrion, by mediating the exchange of 3 sodium ions per 1 calcium ion. Plays a central role in mitochondrial calcium homeostasis by mediating mitochondrial calcium extrusion: calcium efflux is essential for mitochondrial function and cell survival, notably in cardiomyocytes. Regulates rates of glucose-dependent insulin secretion in pancreatic beta-cells during the first phase of insulin secretion: acts by mediating efflux of calcium from mitochondrion, thereby affecting cytoplasmic calcium responses. Required for store-operated Ca(2+) entry (SOCE) and Ca(2+) release-activated Ca(2+) (CRAC) channel regulation: sodium transport by SLC8B1 leads to promote calcium-shuttling that modulates mitochondrial redox status, thereby regulating SOCE activity. Involved in B-lymphocyte chemotaxis. Able to transport Ca(2+) in exchange of either Li(+) or Na(+), explaining how Li(+) catalyzes Ca(2+) exchange. In contrast to other members of the family its function is independent of K(+). In Homo sapiens (Human), this protein is Mitochondrial sodium/calcium exchanger protein.